Consider the following 212-residue polypeptide: Thymidylate kinase (212 aa).

Residue 10-17 (GLDGAGKT) coordinates ATP.

Belongs to the thymidylate kinase family.

The enzyme catalyses dTMP + ATP = dTDP + ADP. Its function is as follows. Phosphorylation of dTMP to form dTDP in both de novo and salvage pathways of dTTP synthesis. This is Thymidylate kinase from Blochmanniella pennsylvanica (strain BPEN).